A 132-amino-acid polypeptide reads, in one-letter code: Large ribosomal subunit protein bL17 (132 aa).

The protein belongs to the bacterial ribosomal protein bL17 family. In terms of assembly, part of the 50S ribosomal subunit. Contacts protein L32.

The protein is Large ribosomal subunit protein bL17 of Albidiferax ferrireducens (strain ATCC BAA-621 / DSM 15236 / T118) (Rhodoferax ferrireducens).